A 515-amino-acid chain; its full sequence is MSEVKNRVCLVVIDGWGISNESKGNAILNAKTPVMDELCALNSHPIEAHGLHVGLPEGLMGNSEVGHLNIGAGRVVYQDIVRINLAVKNKTLVENKHLKEAAERAIKGNGRIHLCGLVSDGGVHSHIDHLFALITALKQLKVPQLYIHFFGDGRDTSPTSGVGFLQQLIDFVNKEQYGEIATIVGRYYAMDRDKRWERIRVCYDALIAGVGEKTTIDKAIDVIKGRYAKDETDEFLKPIILSDKGRTKDGDTLIFFDYRADRMREITECMGMERYKDLKSDIKHPKDMQVIGMTQYKAEFTFPALFPPESHKNVLAEWLSVKGLTQFHCAETEKYAHVTFFFNGGVEKQFENEERCLVPSPKVATYDLEPAMSSAGVADKMIEQLNRKAHAFIMCNFAPPDMVGHTGVYEAAVKAVEATDIAIGRIYEACKKNDYVLMVTADHGNAEKMIAPDGGKHTAHTCNLVPFTCSSLKFKFMDKLPDREMALCDVAPTVLKVLGLPLPSEMTGKPVVIEV.

Residues Asp14 and Ser63 each coordinate Mn(2+). Ser63 is a catalytic residue. Residues His124, 154–155 (RD), Arg186, Arg192, 259–262 (RADR), and Lys334 contribute to the substrate site. The Mn(2+) site is built by Asp401, His405, Asp442, His443, and His460.

It belongs to the BPG-independent phosphoglycerate mutase family. Requires Mg(2+) as cofactor. Mn(2+) serves as cofactor.

It carries out the reaction (2R)-2-phosphoglycerate = (2R)-3-phosphoglycerate. Its pathway is carbohydrate degradation; glycolysis; pyruvate from D-glyceraldehyde 3-phosphate: step 3/5. With respect to regulation, activity is not affected by 2,3-bisphosphoglycerate. Functionally, catalyzes the interconversion of 2-phosphoglycerate and 3-phosphoglycerate. The polypeptide is 2,3-bisphosphoglycerate-independent phosphoglycerate mutase (Onchocerca volvulus).